A 453-amino-acid polypeptide reads, in one-letter code: uncharacterized protein (453 aa).

[4Fe-4S] cluster contacts are provided by Cys74, Cys80, Cys83, and Cys162. S-adenosyl-L-methionine contacts are provided by Gln286, Tyr315, Glu336, and Asp384. Catalysis depends on Cys411, which acts as the Nucleophile.

Belongs to the class I-like SAM-binding methyltransferase superfamily. RNA M5U methyltransferase family.

This is an uncharacterized protein from Staphylococcus aureus (strain COL).